Reading from the N-terminus, the 382-residue chain is Serine protease 43 (382 aa).

Residues 1 to 27 (MGGFCGADRGGFLALLVWLQLLQPLFS) form the signal peptide. The segment at 30-97 (YKPREDSGVM…SGTTTKITLE (68 aa)) is disordered. 2 stretches are compositionally biased toward polar residues: residues 56 to 68 (AQQSRLKSLSISH) and 85 to 95 (GSPSGTTTKIT). The Peptidase S1 domain maps to 119–355 (VDPGSLSAGR…YNEWVSYVLS (237 aa)). Cysteines 144 and 160 form a disulfide. Residues H159 and D205 each act as charge relay system in the active site. 3 disulfide bridges follow: C239–C313, C272–C293, and C303–C331. Catalysis depends on S307, which acts as the Charge relay system. The helical transmembrane segment at 362 to 382 (PMGVLVLYLSLVFPLALLVAL) threads the bilayer.

Belongs to the peptidase S1 family. As to expression, testis-specific. Expressed in germ cells at the stages from late pachytene spermatocytes to spermatids.

The protein resides in the cell membrane. Its function is as follows. Plays a role in spermatogenesis. Involved in germ cell survival during meiosis. Lacks protease activity in vitro. The sequence is that of Serine protease 43 from Mus musculus (Mouse).